Consider the following 148-residue polypeptide: Large ribosomal subunit protein bL9 (148 aa).

It belongs to the bacterial ribosomal protein bL9 family.

Its function is as follows. Binds to the 23S rRNA. The protein is Large ribosomal subunit protein bL9 of Thermus thermophilus.